The primary structure comprises 236 residues: Phosphoribosylaminoimidazole-succinocarboxamide synthase (236 aa).

It belongs to the SAICAR synthetase family.

It carries out the reaction 5-amino-1-(5-phospho-D-ribosyl)imidazole-4-carboxylate + L-aspartate + ATP = (2S)-2-[5-amino-1-(5-phospho-beta-D-ribosyl)imidazole-4-carboxamido]succinate + ADP + phosphate + 2 H(+). Its pathway is purine metabolism; IMP biosynthesis via de novo pathway; 5-amino-1-(5-phospho-D-ribosyl)imidazole-4-carboxamide from 5-amino-1-(5-phospho-D-ribosyl)imidazole-4-carboxylate: step 1/2. The chain is Phosphoribosylaminoimidazole-succinocarboxamide synthase from Pseudomonas aeruginosa (strain LESB58).